The primary structure comprises 303 residues: Polyisoprenyl-teichoic acid--peptidoglycan teichoic acid transferase TagU (303 aa).

Over 1-4 the chain is Cytoplasmic; sequence MKKK. Residues 5-25 form a helical; Signal-anchor for type II membrane protein membrane-spanning segment; it reads ILFWVLGILGVLIIGGGIYAY. Topologically, residues 26–303 are extracellular; the sequence is NVYSSVSNTL…KLRTHLEVTK (278 aa).

Belongs to the LytR/CpsA/Psr (LCP) family.

It localises to the cell membrane. The protein operates within cell wall biogenesis. In terms of biological role, may catalyze the final step in cell wall teichoic acid biosynthesis, the transfer of the anionic cell wall polymers (APs) from their lipid-linked precursor to the cell wall peptidoglycan (PG). In Bacillus anthracis (strain A0248), this protein is Polyisoprenyl-teichoic acid--peptidoglycan teichoic acid transferase TagU.